The primary structure comprises 264 residues: Thymidylate synthase (264 aa).

R21 provides a ligand contact to dUMP. Residue H51 participates in (6R)-5,10-methylene-5,6,7,8-tetrahydrofolate binding. 126–127 lines the dUMP pocket; that stretch reads RR. C146 (nucleophile) is an active-site residue. Residues 166–169, N177, and 207–209 each bind dUMP; these read RSCD and HLY. (6R)-5,10-methylene-5,6,7,8-tetrahydrofolate is bound at residue D169. A263 is a (6R)-5,10-methylene-5,6,7,8-tetrahydrofolate binding site.

It belongs to the thymidylate synthase family. Bacterial-type ThyA subfamily. Homodimer.

The protein localises to the cytoplasm. It catalyses the reaction dUMP + (6R)-5,10-methylene-5,6,7,8-tetrahydrofolate = 7,8-dihydrofolate + dTMP. It functions in the pathway pyrimidine metabolism; dTTP biosynthesis. Catalyzes the reductive methylation of 2'-deoxyuridine-5'-monophosphate (dUMP) to 2'-deoxythymidine-5'-monophosphate (dTMP) while utilizing 5,10-methylenetetrahydrofolate (mTHF) as the methyl donor and reductant in the reaction, yielding dihydrofolate (DHF) as a by-product. This enzymatic reaction provides an intracellular de novo source of dTMP, an essential precursor for DNA biosynthesis. This Aeromonas hydrophila subsp. hydrophila (strain ATCC 7966 / DSM 30187 / BCRC 13018 / CCUG 14551 / JCM 1027 / KCTC 2358 / NCIMB 9240 / NCTC 8049) protein is Thymidylate synthase.